Consider the following 501-residue polypeptide: Phosphatidylinositol 4-kinase type 2-beta (501 aa).

2 disordered regions span residues 1 to 30 (MMAECDPTDGEPGNGSGDSTPETNFLSSEV) and 65 to 122 (TELE…NHFP). Positions 17 to 27 (GDSTPETNFLS) are enriched in polar residues. Over residues 76–88 (ALLLPGPAGSLSP) the composition is skewed to low complexity. Polar residues predominate over residues 99–117 (NMLSSSSDNLASPGNSSGE). Positions 141–471 (GVFPERISQG…VQMPRVVVER (331 aa)) constitute a PI3K/PI4K catalytic domain. The G-loop stretch occupies residues 147 to 153 (ISQGSSG). ATP is bound by residues Ser154 and Lys169. Residues 174–176 (EPY) form an important for substrate binding region. The interval 182 to 195 (KWTKYFHKVCCPCC) is important for interaction with membranes. ATP is bound by residues 278-281 (QLFV) and 292-293 (RK). The segment at 285–293 (HEADFWLRK) is important for interaction with membranes. Residues 322–330 (RNTDRGNDN) are catalytic loop. The interval 362-382 (AIDNGLAFPFKHPDEWRAYPF) is activation loop. Asp364 contributes to the ATP binding site. The segment at 377–386 (WRAYPFHWAW) is important for interaction with membranes.

The protein belongs to the PI3/PI4-kinase family. Type II PI4K subfamily.

The protein resides in the cytoplasm. It is found in the cytosol. It localises to the golgi apparatus membrane. The protein localises to the endoplasmic reticulum membrane. Its subcellular location is the cell membrane. The protein resides in the early endosome membrane. It carries out the reaction a 1,2-diacyl-sn-glycero-3-phospho-(1D-myo-inositol) + ATP = a 1,2-diacyl-sn-glycero-3-phospho-(1D-myo-inositol 4-phosphate) + ADP + H(+). In terms of biological role, contributes to the overall PI4-kinase activity of the cell. This contribution may be especially significant in plasma membrane, endosomal and Golgi compartments. The phosphorylation of phosphatidylinositol (PI) to PI4P is the first committed step in the generation of phosphatidylinositol 4,5-bisphosphate (PIP2), a precursor of the second messenger inositol 1,4,5-trisphosphate (InsP3). The polypeptide is Phosphatidylinositol 4-kinase type 2-beta (pi4k2b) (Danio rerio (Zebrafish)).